A 626-amino-acid polypeptide reads, in one-letter code: Methanol dehydrogenase [cytochrome c] subunit 1 (626 aa).

The N-terminal stretch at 1–27 (MSRFVTSVSALAMLALAPAALSSGAYA) is a signal peptide. Cysteine 130 and cysteine 131 are joined by a disulfide. Residues glutamate 204 and asparagine 288 each contribute to the Ca(2+) site. Residue aspartate 330 is the Proton acceptor of the active site. A disulfide bond links cysteine 413 and cysteine 442.

This sequence belongs to the bacterial PQQ dehydrogenase family. In terms of assembly, heterotetramer composed of 2 alpha and 2 beta subunits. Pyrroloquinoline quinone serves as cofactor. Ca(2+) is required as a cofactor.

Its subcellular location is the cell inner membrane. It carries out the reaction 2 Fe(III)-[cytochrome cL] + a primary alcohol = 2 Fe(II)-[cytochrome cL] + an aldehyde + 2 H(+). In terms of biological role, catalyzes the oxidation of primary alcohols including methanol. This chain is Methanol dehydrogenase [cytochrome c] subunit 1 (moxF), found in Methylorubrum extorquens (strain ATCC 14718 / DSM 1338 / JCM 2805 / NCIMB 9133 / AM1) (Methylobacterium extorquens).